The chain runs to 510 residues: 2,3-bisphosphoglycerate-independent phosphoglycerate mutase (510 aa).

Residue aspartate 12 coordinates Mn(2+). The residue at position 36 (tyrosine 36) is a Phosphotyrosine. Mn(2+) is bound at residue serine 62. Residue serine 62 is the Phosphoserine intermediate of the active site. Residues histidine 123, 153 to 154 (RD), arginine 185, arginine 191, 261 to 264 (RPDR), and lysine 336 each bind substrate. 5 residues coordinate Mn(2+): aspartate 403, histidine 407, aspartate 444, histidine 445, and histidine 462.

Belongs to the BPG-independent phosphoglycerate mutase family. Monomer. Mn(2+) serves as cofactor.

It carries out the reaction (2R)-2-phosphoglycerate = (2R)-3-phosphoglycerate. It participates in carbohydrate degradation; glycolysis; pyruvate from D-glyceraldehyde 3-phosphate: step 3/5. In terms of biological role, essential for rapid growth and for sporulation. Catalyzes the interconversion of 2-phosphoglycerate and 3-phosphoglycerate. In Halalkalibacterium halodurans (strain ATCC BAA-125 / DSM 18197 / FERM 7344 / JCM 9153 / C-125) (Bacillus halodurans), this protein is 2,3-bisphosphoglycerate-independent phosphoglycerate mutase.